A 531-amino-acid polypeptide reads, in one-letter code: Plant UBX domain-containing protein 11 (531 aa).

Met-1 carries the post-translational modification N-acetylmethionine. A compositionally biased stretch (low complexity) spans 160-173; sequence AVASPSTASSVQPS. Disordered stretches follow at residues 160–316 and 441–531; these read AVAS…KASD and ANAS…NDRR. Polar residues-rich tracts occupy residues 174–190 and 201–214; these read ETKS…NNDG and EPSN…NQPA. Residues 290–301 show a composition bias toward basic and acidic residues; it reads VDTKETMKPKDE. In terms of domain architecture, UBX spans 312–390; that stretch reads KKASDVHLNI…RLFDRQALVV (79 aa). Composition is skewed to polar residues over residues 441–478 and 486–496; these read ANAS…GRSN and TSRIGSNIHTL.

In terms of assembly, interacts with CDC48A.

In Arabidopsis thaliana (Mouse-ear cress), this protein is Plant UBX domain-containing protein 11.